We begin with the raw amino-acid sequence, 207 residues long: MPKVAVYNVSGQKVSEMELSENIFGVEVNEHVLYEAVKNQLANKRQGTQSAKTRAEVRGGGRKPWKQKGTGRARAGTIRSPLWIGGGTVFAPKPRDHSYTLPRKVKRLALKSALTSKVNNEELLVLDELSLDTPKTKDMVNILKNLNADKKVLLVVGEKNEAIIKSASNIPGVTTALVNTINVYDILNHDKFIITKDAVEKVEEVYA.

Positions 43–52 (NKRQGTQSAK) are enriched in polar residues. Positions 43–72 (NKRQGTQSAKTRAEVRGGGRKPWKQKGTGR) are disordered. Positions 60 to 71 (GGRKPWKQKGTG) are enriched in basic residues.

Belongs to the universal ribosomal protein uL4 family. Part of the 50S ribosomal subunit.

Functionally, one of the primary rRNA binding proteins, this protein initially binds near the 5'-end of the 23S rRNA. It is important during the early stages of 50S assembly. It makes multiple contacts with different domains of the 23S rRNA in the assembled 50S subunit and ribosome. Its function is as follows. Forms part of the polypeptide exit tunnel. The polypeptide is Large ribosomal subunit protein uL4 (Alkaliphilus metalliredigens (strain QYMF)).